A 145-amino-acid chain; its full sequence is Hemoglobin subunit beta (145 aa).

The Globin domain occupies 1–145; it reads MLTAEEKAAV…VANALAHRYH (145 aa). Thr-11 carries the phosphothreonine modification. At Ser-43 the chain carries Phosphoserine. Lys-58 bears the N6-acetyllysine mark. His-62 lines the heme b pocket. The residue at position 81 (Lys-81) is an N6-acetyllysine. His-91 provides a ligand contact to heme b. Cys-92 is subject to S-nitrosocysteine.

It belongs to the globin family. As to quaternary structure, heterotetramer of two alpha chains and two beta chains. In terms of tissue distribution, red blood cells.

Its function is as follows. Involved in oxygen transport from the lung to the various peripheral tissues. This chain is Hemoglobin subunit beta (HBB), found in Tragelaphus strepsiceros (Greater kudu).